The chain runs to 438 residues: Trigger factor (438 aa).

In terms of domain architecture, PPIase FKBP-type spans 162 to 247; sequence GDRVNINYQG…LNKVEAPKLP (86 aa).

The protein belongs to the FKBP-type PPIase family. Tig subfamily.

It localises to the cytoplasm. The catalysed reaction is [protein]-peptidylproline (omega=180) = [protein]-peptidylproline (omega=0). Functionally, involved in protein export. Acts as a chaperone by maintaining the newly synthesized protein in an open conformation. Functions as a peptidyl-prolyl cis-trans isomerase. The sequence is that of Trigger factor from Nitrosomonas eutropha (strain DSM 101675 / C91 / Nm57).